The chain runs to 637 residues: Chaperone protein HtpG (637 aa).

Residues 1-345 (MSQQETHGFQ…SNDLPLNVSR (345 aa)) are a; substrate-binding. A b region spans residues 346-562 (EILQDNHITK…EGEMSTQMIK (217 aa)). The tract at residues 563–637 (LMQAAGQPVP…MNQMLLANLK (75 aa)) is c.

This sequence belongs to the heat shock protein 90 family. Homodimer.

It localises to the cytoplasm. Molecular chaperone. Has ATPase activity. The protein is Chaperone protein HtpG of Shewanella oneidensis (strain ATCC 700550 / JCM 31522 / CIP 106686 / LMG 19005 / NCIMB 14063 / MR-1).